Consider the following 300-residue polypeptide: Acetyl-coenzyme A carboxylase carboxyl transferase subunit beta 2 (300 aa).

The CoA carboxyltransferase N-terminal domain occupies 26-294 (VWIKCPSCRE…ATAHKSEPIV (269 aa)). Residues Cys30, Cys33, Cys49, and Cys51 each contribute to the Zn(2+) site. The segment at 30–51 (CPSCRELIYHKQLAERMKVCRC) adopts a C4-type zinc-finger fold.

This sequence belongs to the AccD/PCCB family. In terms of assembly, acetyl-CoA carboxylase is a heterohexamer composed of biotin carboxyl carrier protein (AccB), biotin carboxylase (AccC) and two subunits each of ACCase subunit alpha (AccA) and ACCase subunit beta (AccD). Requires Zn(2+) as cofactor.

Its subcellular location is the cytoplasm. The enzyme catalyses N(6)-carboxybiotinyl-L-lysyl-[protein] + acetyl-CoA = N(6)-biotinyl-L-lysyl-[protein] + malonyl-CoA. The protein operates within lipid metabolism; malonyl-CoA biosynthesis; malonyl-CoA from acetyl-CoA: step 1/1. Functionally, component of the acetyl coenzyme A carboxylase (ACC) complex. Biotin carboxylase (BC) catalyzes the carboxylation of biotin on its carrier protein (BCCP) and then the CO(2) group is transferred by the transcarboxylase to acetyl-CoA to form malonyl-CoA. This chain is Acetyl-coenzyme A carboxylase carboxyl transferase subunit beta 2, found in Roseiflexus sp. (strain RS-1).